Consider the following 410-residue polypeptide: 3-phosphoshikimate 1-carboxyvinyltransferase (410 aa).

Residues Lys20, Ser21, and Arg25 each contribute to the 3-phosphoshikimate site. Lys20 contributes to the phosphoenolpyruvate binding site. The phosphoenolpyruvate site is built by Gly87 and Arg115. Positions 157, 158, 159, 183, 293, and 320 each coordinate 3-phosphoshikimate. Gln159 is a phosphoenolpyruvate binding site. The active-site Proton acceptor is Asp293. Residues Arg324, Arg365, and Lys391 each coordinate phosphoenolpyruvate.

The protein belongs to the EPSP synthase family. In terms of assembly, monomer.

The protein localises to the cytoplasm. It carries out the reaction 3-phosphoshikimate + phosphoenolpyruvate = 5-O-(1-carboxyvinyl)-3-phosphoshikimate + phosphate. The protein operates within metabolic intermediate biosynthesis; chorismate biosynthesis. Catalyzes the transfer of the enolpyruvyl moiety of phosphoenolpyruvate (PEP) to the 5-hydroxyl of shikimate-3-phosphate (S3P) to produce enolpyruvyl shikimate-3-phosphate and inorganic phosphate. In Thermoplasma volcanium (strain ATCC 51530 / DSM 4299 / JCM 9571 / NBRC 15438 / GSS1), this protein is 3-phosphoshikimate 1-carboxyvinyltransferase.